Here is a 561-residue protein sequence, read N- to C-terminus: DNA ligase B (561 aa).

K124 acts as the N6-AMP-lysine intermediate in catalysis.

The protein belongs to the NAD-dependent DNA ligase family. LigB subfamily.

The enzyme catalyses NAD(+) + (deoxyribonucleotide)n-3'-hydroxyl + 5'-phospho-(deoxyribonucleotide)m = (deoxyribonucleotide)n+m + AMP + beta-nicotinamide D-nucleotide.. Functionally, catalyzes the formation of phosphodiester linkages between 5'-phosphoryl and 3'-hydroxyl groups in double-stranded DNA using NAD as a coenzyme and as the energy source for the reaction. This Cronobacter sakazakii (strain ATCC BAA-894) (Enterobacter sakazakii) protein is DNA ligase B.